The chain runs to 296 residues: GTPase Era (296 aa).

The Era-type G domain occupies 7–174 (KCSMNAIVGT…INYLCEISPS (168 aa)). A G1 region spans residues 15 to 22 (GTTNAGKS). 15-22 (GTTNAGKS) contributes to the GTP binding site. The segment at 41 to 45 (QTTRV) is G2. Residues 62-65 (DTPG) form a G3 region. GTP contacts are provided by residues 62–66 (DTPGI) and 124–127 (NKID). Residues 124–127 (NKID) are G4. Residues 153–155 (ISA) form a G5 region. Residues 205-282 (LHHELPYSLS…HLFLFVKVRE (78 aa)) enclose the KH type-2 domain.

This sequence belongs to the TRAFAC class TrmE-Era-EngA-EngB-Septin-like GTPase superfamily. Era GTPase family. Monomer.

The protein resides in the cytoplasm. Its subcellular location is the cell inner membrane. An essential GTPase that binds both GDP and GTP, with rapid nucleotide exchange. Plays a role in 16S rRNA processing and 30S ribosomal subunit biogenesis and possibly also in cell cycle regulation and energy metabolism. The sequence is that of GTPase Era from Ehrlichia canis (strain Jake).